The sequence spans 590 residues: Muscarinic acetylcholine receptor M3 (590 aa).

Topologically, residues 1–67 (MTLHSNSTTS…DPLGGHTVWQ (67 aa)) are extracellular. N-linked (GlcNAc...) asparagine glycans are attached at residues Asn6, Asn15, Asn41, and Asn48. A helical transmembrane segment spans residues 68–91 (VVFIAFLTGILALVTIIGNILVIV). Over 92-104 (SFKVNKQLKTVNN) the chain is Cytoplasmic. The chain crosses the membrane as a helical span at residues 105-130 (YFLLSLACADLIIGVISMNLFTTYII). The Extracellular segment spans residues 131-142 (MNRWALGNLACD). Cysteines 141 and 221 form a disulfide. Residues 143 to 164 (LWLAIDYVASNASVMNLLVISF) traverse the membrane as a helical segment. Residues 165–184 (DRYFSITRPLTYRAKRTTKR) are Cytoplasmic-facing. A helical transmembrane segment spans residues 185 to 206 (AGVMIGLAWVISFVLWAPAILF). Over 207 to 229 (WQYFVGKRTVPPGECFIQFLSEP) the chain is Extracellular. A helical membrane pass occupies residues 230-252 (TITFGTAIAAFYMPVTIMTILYW). Residues 253-491 (RIYKETEKRT…SLVKEKKAAQ (239 aa)) are Cytoplasmic-facing. A Basolateral sorting signal motif is present at residues 275–281 (AETENFV). The tract at residues 323-357 (SSEQMDQDHSSSDSWNNNDAAASLENSASSDEEDI) is disordered. Residues 334–345 (SDSWNNNDAAAS) are compositionally biased toward low complexity. A Phosphoserine modification is found at Ser385. A helical transmembrane segment spans residues 492 to 514 (TLSAILLAFIITWTPYNIMVLVN). The Extracellular segment spans residues 515 to 526 (TFCDSCIPKTFW). Residues Cys517 and Cys520 are joined by a disulfide bond. The chain crosses the membrane as a helical span at residues 527–546 (NLGYWLCYINSTVNPVCYAL). Over 547–590 (CNKTFRTTFKMLLLCQCDKKKRRKQQYQQRQSVIFHKRAPEQAL) the chain is Cytoplasmic.

It belongs to the G-protein coupled receptor 1 family. Muscarinic acetylcholine receptor subfamily. CHRM3 sub-subfamily. In terms of assembly, homodimer; the dimers can form tetramers. Interacts with NALCN. Interacts with TMEM147.

The protein localises to the cell membrane. The protein resides in the postsynaptic cell membrane. It localises to the basolateral cell membrane. Its subcellular location is the endoplasmic reticulum membrane. The muscarinic acetylcholine receptor mediates various cellular responses, including inhibition of adenylate cyclase, breakdown of phosphoinositides and modulation of potassium channels through the action of G proteins. Primary transducing effect is Pi turnover. This Pongo pygmaeus (Bornean orangutan) protein is Muscarinic acetylcholine receptor M3 (CHRM3).